A 153-amino-acid polypeptide reads, in one-letter code: Small ribosomal subunit protein eS19 (153 aa).

The protein belongs to the eukaryotic ribosomal protein eS19 family. In terms of assembly, part of the 30S ribosomal subunit.

Its function is as follows. May be involved in maturation of the 30S ribosomal subunit. In Aeropyrum pernix (strain ATCC 700893 / DSM 11879 / JCM 9820 / NBRC 100138 / K1), this protein is Small ribosomal subunit protein eS19.